Consider the following 143-residue polypeptide: Oxoglutarate dehydrogenase inhibitor (143 aa).

T14 is subject to Phosphothreonine. Residues 29-38 (GAGAATASGS) show a composition bias toward low complexity. The interval 29-50 (GAGAATASGSDVTPPAGAGMLV) is disordered. An FHA domain is found at 68-117 (TTAGRHPESDIFLDDVTVSRRHAEFRRQDGSFEVVDVGSLNGTYVNREPR).

The protein resides in the cytoplasm. Its function is as follows. An essential component of the PknG signaling pathway. When unphosphorylated, it inhibits the activity of 2-oxoglutarate dehydrogenase. When phosphorylated it does not inhibit 2-oxoglutarate dehydrogenase. The polypeptide is Oxoglutarate dehydrogenase inhibitor (odhI) (Corynebacterium diphtheriae (strain ATCC 700971 / NCTC 13129 / Biotype gravis)).